The sequence spans 228 residues: Large ribosomal subunit protein uL1 (228 aa).

This sequence belongs to the universal ribosomal protein uL1 family. In terms of assembly, part of the 50S ribosomal subunit.

Binds directly to 23S rRNA. The L1 stalk is quite mobile in the ribosome, and is involved in E site tRNA release. Its function is as follows. Protein L1 is also a translational repressor protein, it controls the translation of the L11 operon by binding to its mRNA. The polypeptide is Large ribosomal subunit protein uL1 (Clavibacter sepedonicus (Clavibacter michiganensis subsp. sepedonicus)).